The following is a 399-amino-acid chain: F-box/kelch-repeat protein At5g48980 (399 aa).

Positions 1 to 11 (MADSQRLSTAS) are enriched in polar residues. Residues 1 to 29 (MADSQRLSTASGVKDGQPPWKKKKLSNDT) are disordered. One can recognise an F-box domain in the interval 29–75 (TTSNPSLPYDVILIILARVSRSYYTNLSLVSKSFRSILTSPELYKTR). Residues 199–248 (IVYLPGSFESPDSLNCVEVYNTMTQTWKPVPPEKRMFKLENLEKKIYYKS) form a Kelch repeat.

The chain is F-box/kelch-repeat protein At5g48980 from Arabidopsis thaliana (Mouse-ear cress).